A 505-amino-acid polypeptide reads, in one-letter code: Lysine--tRNA ligase (505 aa).

Mg(2+) is bound by residues Glu403 and Glu410.

Belongs to the class-II aminoacyl-tRNA synthetase family. Homodimer. It depends on Mg(2+) as a cofactor.

The protein resides in the cytoplasm. It carries out the reaction tRNA(Lys) + L-lysine + ATP = L-lysyl-tRNA(Lys) + AMP + diphosphate. The polypeptide is Lysine--tRNA ligase (Methanospirillum hungatei JF-1 (strain ATCC 27890 / DSM 864 / NBRC 100397 / JF-1)).